Consider the following 301-residue polypeptide: Homoserine kinase (301 aa).

Residue 86–96 coordinates ATP; that stretch reads PLARGLGSSAT.

The protein belongs to the GHMP kinase family. Homoserine kinase subfamily.

It localises to the cytoplasm. It carries out the reaction L-homoserine + ATP = O-phospho-L-homoserine + ADP + H(+). It functions in the pathway amino-acid biosynthesis; L-threonine biosynthesis; L-threonine from L-aspartate: step 4/5. Functionally, catalyzes the ATP-dependent phosphorylation of L-homoserine to L-homoserine phosphate. This Thermosynechococcus vestitus (strain NIES-2133 / IAM M-273 / BP-1) protein is Homoserine kinase.